The chain runs to 258 residues: 2-succinyl-6-hydroxy-2,4-cyclohexadiene-1-carboxylate synthase (258 aa).

Belongs to the AB hydrolase superfamily. MenH family. In terms of assembly, monomer.

It carries out the reaction 5-enolpyruvoyl-6-hydroxy-2-succinyl-cyclohex-3-ene-1-carboxylate = (1R,6R)-6-hydroxy-2-succinyl-cyclohexa-2,4-diene-1-carboxylate + pyruvate. Its pathway is quinol/quinone metabolism; 1,4-dihydroxy-2-naphthoate biosynthesis; 1,4-dihydroxy-2-naphthoate from chorismate: step 3/7. It functions in the pathway quinol/quinone metabolism; menaquinone biosynthesis. Its function is as follows. Catalyzes a proton abstraction reaction that results in 2,5-elimination of pyruvate from 2-succinyl-5-enolpyruvyl-6-hydroxy-3-cyclohexene-1-carboxylate (SEPHCHC) and the formation of 2-succinyl-6-hydroxy-2,4-cyclohexadiene-1-carboxylate (SHCHC). This is 2-succinyl-6-hydroxy-2,4-cyclohexadiene-1-carboxylate synthase from Enterobacter sp. (strain 638).